The following is a 148-amino-acid chain: 3-dehydroquinate dehydratase (148 aa).

Y23 functions as the Proton acceptor in the catalytic mechanism. Positions 74, 80, and 87 each coordinate substrate. H100 (proton donor) is an active-site residue. Residues 101–102 (IS) and R111 contribute to the substrate site.

The protein belongs to the type-II 3-dehydroquinase family. As to quaternary structure, homododecamer.

The catalysed reaction is 3-dehydroquinate = 3-dehydroshikimate + H2O. It functions in the pathway metabolic intermediate biosynthesis; chorismate biosynthesis; chorismate from D-erythrose 4-phosphate and phosphoenolpyruvate: step 3/7. Functionally, catalyzes a trans-dehydration via an enolate intermediate. This chain is 3-dehydroquinate dehydratase, found in Halothermothrix orenii (strain H 168 / OCM 544 / DSM 9562).